The primary structure comprises 317 residues: Type II methyltransferase M.MgeORF184P (317 aa).

This sequence belongs to the N(4)/N(6)-methyltransferase family.

The enzyme catalyses a 2'-deoxyadenosine in DNA + S-adenosyl-L-methionine = an N(6)-methyl-2'-deoxyadenosine in DNA + S-adenosyl-L-homocysteine + H(+). In terms of biological role, probably recognizes the double-stranded sequence 5'-CTAT-3' and methylates A-3 on only one strand; as the bacterial DNA is methylated on this sequence and this is the only type II methylase in the genome, it is probably responsible for all of the methylation on this site in the genome. The chain is Type II methyltransferase M.MgeORF184P from Mycoplasma genitalium (strain ATCC 33530 / DSM 19775 / NCTC 10195 / G37) (Mycoplasmoides genitalium).